Reading from the N-terminus, the 96-residue chain is MAASPYYLRQTHAPDCACSVCWSVRQAIPLHNPSPCPDCRPPGLPYLEGGRWLCRPRSFCAKHDPSRRPPKYWHVVYDSGKPTPFVPVREDFQLEG.

The chain is 10.9 kDa protein from Pseudomonas aeruginosa (Bacteriophage Pf1).